The chain runs to 288 residues: Type II iodothyronine deiodinase (288 aa).

The Lumenal portion of the chain corresponds to 1–5 (MPHVN). The helical; Signal-anchor for type III membrane protein transmembrane segment at 6 to 26 (LLVVLLILPGVFSNCLFLALY) threads the bilayer. The Cytoplasmic portion of the chain corresponds to 27-288 (DAVSFLRRAL…SFLESVKASR (262 aa)). Residues 99–130 (SCAASSSSSHETPTPRTTAEAAATVTTSTTTT) form a disordered region. Selenocysteine 160 is a catalytic residue. Selenocysteine 160 is a non-standard amino acid (selenocysteine).

Belongs to the iodothyronine deiodinase family. As to quaternary structure, predominantly monomer. Can form homodimers but homodimerization is not essential for enzyme activity. Expressed in intestine, liver, kidney and brain of immediately premetamorphic larvae, of larvae in all stages of metamorphosis and of parasitic feeding juveniles. In immediately premetamorphic larvae, levels are significantly higher in intestine and liver than in kidney and brain.

The protein localises to the endoplasmic reticulum membrane. It carries out the reaction 3,3',5-triiodo-L-thyronine + iodide + A + H(+) = L-thyroxine + AH2. It catalyses the reaction 3,3'-diiodo-L-thyronine + iodide + A + H(+) = 3,3',5'-triiodo-L-thyronine + AH2. The enzyme catalyses 3'-iodo-L-thyronine + iodide + A + H(+) = 3',5'-diiodo-L-thyronine + AH2. The catalysed reaction is 3,3'-diiodothyronamine + iodide + A + H(+) = 3,3',5'-triiodothyronamine + AH2. It carries out the reaction 3'-iodothyronamine + iodide + A + H(+) = 3',5'-diiodothyronamine + AH2. In terms of biological role, plays a crucial role in the metabolism of thyroid hormones (TH) and has specific roles in TH activation and inactivation by deiodination. Catalyzes the deiodination of L-thyroxine (T4) to 3,5,3'-triiodothyronine (T3), 3,3',5'-triiodothyronine (rT3) to 3,3'-diiodothyronine (3,3'-T2) and 3',5'-diiodothyronine (3',5'-T2) to 3'-monoiodothyronine (3'-T1) via outer-ring deiodination (ORD). Catalyzes the phenolic ring deiodinations of 3,3',5'-triiodothyronamine and 3',5'- diiodothyronamine. This Petromyzon marinus (Sea lamprey) protein is Type II iodothyronine deiodinase.